Consider the following 236-residue polypeptide: 27 kDa hemolymph protein (236 aa).

An N-terminal signal peptide occupies residues 1-17; it reads MMWKLIIVTILAVGVLC.

In terms of assembly, monomer. Hemolymph.

It is found in the secreted. The chain is 27 kDa hemolymph protein from Galleria mellonella (Greater wax moth).